A 284-amino-acid polypeptide reads, in one-letter code: NH(3)-dependent NAD(+) synthetase (284 aa).

Residue 51-58 (GISGGIDS) participates in ATP binding. A Mg(2+)-binding site is contributed by D57. R148 lines the deamido-NAD(+) pocket. Residue T168 coordinates ATP. Residue E173 participates in Mg(2+) binding. Deamido-NAD(+) contacts are provided by K181 and D188. ATP is bound by residues K197 and T219. A deamido-NAD(+)-binding site is contributed by 268–269 (HK).

The protein belongs to the NAD synthetase family. In terms of assembly, homodimer.

It catalyses the reaction deamido-NAD(+) + NH4(+) + ATP = AMP + diphosphate + NAD(+) + H(+). Its pathway is cofactor biosynthesis; NAD(+) biosynthesis; NAD(+) from deamido-NAD(+) (ammonia route): step 1/1. In terms of biological role, catalyzes the ATP-dependent amidation of deamido-NAD to form NAD. Uses ammonia as a nitrogen source. The protein is NH(3)-dependent NAD(+) synthetase of Burkholderia mallei (strain NCTC 10247).